We begin with the raw amino-acid sequence, 512 residues long: uncharacterized protein (512 aa).

The next 12 helical transmembrane spans lie at 25-45 (GFYT…VICA), 55-75 (LLYP…PLIL), 96-116 (LVVC…VFLA), 123-143 (VVTG…LPAV), 148-168 (LLLT…LVIV), 183-203 (LLWL…FVGP), 238-258 (MTTY…SLRA), 263-283 (GSLH…SMLW), 294-314 (GLLL…MVAE), 329-349 (FLLA…WISV), 359-379 (LICV…VALG), and 386-406 (ATIW…VASL). Residues 428–512 (YRPATPNPIH…APLDAGQRIA (85 aa)) form a disordered region.

The protein resides in the cell membrane. This is an uncharacterized protein from Mycobacterium tuberculosis (strain CDC 1551 / Oshkosh).